The sequence spans 281 residues: Translation initiation factor IF3-4, chloroplastic (281 aa).

Residues 1–51 constitute a chloroplast transit peptide; it reads MAGITSTVGFNAILAGATKTVSHPVKSKLFGLRLCVPEFSIVSLSPYHHRR. Disordered regions lie at residues 63–86 and 253–281; these read GGGGSRFPGDRRGRQKESEDDDSL and KVQEPPPKKKKKPADDKVSAANITATQDI. Basic and acidic residues-rich tracts occupy residues 70-79 and 253-270; these read PGDRRGRQKE and KVQEPPPKKKKKPADDKV.

This sequence belongs to the IF-3 family. In terms of assembly, monomer.

The protein resides in the plastid. Its subcellular location is the chloroplast. Chloroplast translation initiation factor that is essential for the coordination of leaf and chloroplast development. IF-3 binds to the 30S ribosomal subunit and shifts the equilibrium between 70S ribosomes and their 50S and 30S subunits in favor of the free subunits, thus enhancing the availability of 30S subunits on which protein synthesis initiation begins. This chain is Translation initiation factor IF3-4, chloroplastic, found in Arabidopsis thaliana (Mouse-ear cress).